Reading from the N-terminus, the 359-residue chain is Protein-glutamate methylesterase/protein-glutamine glutaminase 1 (359 aa).

The Response regulatory domain maps to 4–121; that stretch reads SVLIVDDSAV…RAFLLEAAKE (118 aa). At aspartate 55 the chain carries 4-aspartylphosphate. The region spanning 169–354 is the CheB-type methylesterase domain; the sequence is YRTTEKIIAI…MSLERIAHML (186 aa). Residues serine 181, histidine 207, and aspartate 303 contribute to the active site.

Belongs to the CheB family. In terms of processing, phosphorylated by CheA. Phosphorylation of the N-terminal regulatory domain activates the methylesterase activity.

It localises to the cytoplasm. The enzyme catalyses [protein]-L-glutamate 5-O-methyl ester + H2O = L-glutamyl-[protein] + methanol + H(+). The catalysed reaction is L-glutaminyl-[protein] + H2O = L-glutamyl-[protein] + NH4(+). Functionally, involved in chemotaxis. Part of a chemotaxis signal transduction system that modulates chemotaxis in response to various stimuli. Catalyzes the demethylation of specific methylglutamate residues introduced into the chemoreceptors (methyl-accepting chemotaxis proteins or MCP) by CheR. Also mediates the irreversible deamidation of specific glutamine residues to glutamic acid. The polypeptide is Protein-glutamate methylesterase/protein-glutamine glutaminase 1 (Chromobacterium violaceum (strain ATCC 12472 / DSM 30191 / JCM 1249 / CCUG 213 / NBRC 12614 / NCIMB 9131 / NCTC 9757 / MK)).